The following is a 177-amino-acid chain: ATP synthase subunit delta (177 aa).

The protein belongs to the ATPase delta chain family. F-type ATPases have 2 components, F(1) - the catalytic core - and F(0) - the membrane proton channel. F(1) has five subunits: alpha(3), beta(3), gamma(1), delta(1), epsilon(1). F(0) has three main subunits: a(1), b(2) and c(10-14). The alpha and beta chains form an alternating ring which encloses part of the gamma chain. F(1) is attached to F(0) by a central stalk formed by the gamma and epsilon chains, while a peripheral stalk is formed by the delta and b chains.

It localises to the cell inner membrane. F(1)F(0) ATP synthase produces ATP from ADP in the presence of a proton or sodium gradient. F-type ATPases consist of two structural domains, F(1) containing the extramembraneous catalytic core and F(0) containing the membrane proton channel, linked together by a central stalk and a peripheral stalk. During catalysis, ATP synthesis in the catalytic domain of F(1) is coupled via a rotary mechanism of the central stalk subunits to proton translocation. In terms of biological role, this protein is part of the stalk that links CF(0) to CF(1). It either transmits conformational changes from CF(0) to CF(1) or is implicated in proton conduction. In Flavobacterium johnsoniae (strain ATCC 17061 / DSM 2064 / JCM 8514 / BCRC 14874 / CCUG 350202 / NBRC 14942 / NCIMB 11054 / UW101) (Cytophaga johnsonae), this protein is ATP synthase subunit delta.